The primary structure comprises 236 residues: Phosphoribosylaminoimidazole-succinocarboxamide synthase (236 aa).

The protein belongs to the SAICAR synthetase family.

It catalyses the reaction 5-amino-1-(5-phospho-D-ribosyl)imidazole-4-carboxylate + L-aspartate + ATP = (2S)-2-[5-amino-1-(5-phospho-beta-D-ribosyl)imidazole-4-carboxamido]succinate + ADP + phosphate + 2 H(+). The protein operates within purine metabolism; IMP biosynthesis via de novo pathway; 5-amino-1-(5-phospho-D-ribosyl)imidazole-4-carboxamide from 5-amino-1-(5-phospho-D-ribosyl)imidazole-4-carboxylate: step 1/2. The protein is Phosphoribosylaminoimidazole-succinocarboxamide synthase of Rickettsia massiliae (strain Mtu5).